The chain runs to 143 residues: Hemoglobin subunit alpha-1 (143 aa).

N-acetylserine is present on S2. Residues 2–143 (SLSSKDKATV…LALALAEKYR (142 aa)) enclose the Globin domain. H60 lines the O2 pocket. Position 89 (H89) interacts with heme b.

It belongs to the globin family. Hb 1 is a heterotetramer of two alpha-1 and two beta-1 chains. Red blood cells.

Functionally, involved in oxygen transport from gills to the various peripheral tissues. This Arctogadus glacialis (Arctic cod) protein is Hemoglobin subunit alpha-1 (hba1).